A 254-amino-acid chain; its full sequence is Phosphoribosylaminoimidazole-succinocarboxamide synthase (254 aa).

This sequence belongs to the SAICAR synthetase family.

It catalyses the reaction 5-amino-1-(5-phospho-D-ribosyl)imidazole-4-carboxylate + L-aspartate + ATP = (2S)-2-[5-amino-1-(5-phospho-beta-D-ribosyl)imidazole-4-carboxamido]succinate + ADP + phosphate + 2 H(+). Its pathway is purine metabolism; IMP biosynthesis via de novo pathway; 5-amino-1-(5-phospho-D-ribosyl)imidazole-4-carboxamide from 5-amino-1-(5-phospho-D-ribosyl)imidazole-4-carboxylate: step 1/2. The chain is Phosphoribosylaminoimidazole-succinocarboxamide synthase from Bartonella quintana (strain Toulouse) (Rochalimaea quintana).